Reading from the N-terminus, the 425-residue chain is Glutamyl-tRNA reductase (425 aa).

Substrate is bound by residues 47 to 50 (TCNR), S107, 112 to 114 (EDQ), and Q118. Residue C48 is the Nucleophile of the active site. NADP(+) is bound at residue 187-192 (GAGHIA).

This sequence belongs to the glutamyl-tRNA reductase family. In terms of assembly, homodimer.

It catalyses the reaction (S)-4-amino-5-oxopentanoate + tRNA(Glu) + NADP(+) = L-glutamyl-tRNA(Glu) + NADPH + H(+). Its pathway is porphyrin-containing compound metabolism; protoporphyrin-IX biosynthesis; 5-aminolevulinate from L-glutamyl-tRNA(Glu): step 1/2. It participates in porphyrin-containing compound metabolism; chlorophyll biosynthesis. Functionally, catalyzes the NADPH-dependent reduction of glutamyl-tRNA(Glu) to glutamate 1-semialdehyde (GSA). This is Glutamyl-tRNA reductase from Roseiflexus sp. (strain RS-1).